Consider the following 303-residue polypeptide: Glycine--tRNA ligase alpha subunit (303 aa).

It belongs to the class-II aminoacyl-tRNA synthetase family. As to quaternary structure, tetramer of two alpha and two beta subunits.

The protein localises to the cytoplasm. The enzyme catalyses tRNA(Gly) + glycine + ATP = glycyl-tRNA(Gly) + AMP + diphosphate. This Escherichia fergusonii (strain ATCC 35469 / DSM 13698 / CCUG 18766 / IAM 14443 / JCM 21226 / LMG 7866 / NBRC 102419 / NCTC 12128 / CDC 0568-73) protein is Glycine--tRNA ligase alpha subunit.